The following is a 433-amino-acid chain: 3-phosphoshikimate 1-carboxyvinyltransferase (433 aa).

The 3-phosphoshikimate site is built by lysine 22, serine 23, and arginine 27. Lysine 22 serves as a coordination point for phosphoenolpyruvate. Glycine 95 and arginine 123 together coordinate phosphoenolpyruvate. 3-phosphoshikimate contacts are provided by serine 166, glutamine 168, aspartate 314, and lysine 341. Glutamine 168 is a binding site for phosphoenolpyruvate. Aspartate 314 (proton acceptor) is an active-site residue. Residues arginine 345 and arginine 386 each coordinate phosphoenolpyruvate.

This sequence belongs to the EPSP synthase family. Monomer.

The protein resides in the cytoplasm. It carries out the reaction 3-phosphoshikimate + phosphoenolpyruvate = 5-O-(1-carboxyvinyl)-3-phosphoshikimate + phosphate. It participates in metabolic intermediate biosynthesis; chorismate biosynthesis; chorismate from D-erythrose 4-phosphate and phosphoenolpyruvate: step 6/7. Catalyzes the transfer of the enolpyruvyl moiety of phosphoenolpyruvate (PEP) to the 5-hydroxyl of shikimate-3-phosphate (S3P) to produce enolpyruvyl shikimate-3-phosphate and inorganic phosphate. This is 3-phosphoshikimate 1-carboxyvinyltransferase from Acidithiobacillus ferrooxidans (strain ATCC 23270 / DSM 14882 / CIP 104768 / NCIMB 8455) (Ferrobacillus ferrooxidans (strain ATCC 23270)).